A 242-amino-acid polypeptide reads, in one-letter code: Pyridoxine 5'-phosphate synthase (242 aa).

Asn-6 lines the 3-amino-2-oxopropyl phosphate pocket. 8–9 (DH) serves as a coordination point for 1-deoxy-D-xylulose 5-phosphate. Residue Arg-17 coordinates 3-amino-2-oxopropyl phosphate. Residue His-42 is the Proton acceptor of the active site. Residues Arg-44 and His-49 each contribute to the 1-deoxy-D-xylulose 5-phosphate site. Glu-69 acts as the Proton acceptor in catalysis. A 1-deoxy-D-xylulose 5-phosphate-binding site is contributed by Thr-99. His-190 acts as the Proton donor in catalysis. Residues Gly-191 and 212 to 213 (GH) contribute to the 3-amino-2-oxopropyl phosphate site.

Belongs to the PNP synthase family. Homooctamer; tetramer of dimers.

Its subcellular location is the cytoplasm. It carries out the reaction 3-amino-2-oxopropyl phosphate + 1-deoxy-D-xylulose 5-phosphate = pyridoxine 5'-phosphate + phosphate + 2 H2O + H(+). The protein operates within cofactor biosynthesis; pyridoxine 5'-phosphate biosynthesis; pyridoxine 5'-phosphate from D-erythrose 4-phosphate: step 5/5. Catalyzes the complicated ring closure reaction between the two acyclic compounds 1-deoxy-D-xylulose-5-phosphate (DXP) and 3-amino-2-oxopropyl phosphate (1-amino-acetone-3-phosphate or AAP) to form pyridoxine 5'-phosphate (PNP) and inorganic phosphate. The protein is Pyridoxine 5'-phosphate synthase of Neisseria meningitidis serogroup B (strain ATCC BAA-335 / MC58).